We begin with the raw amino-acid sequence, 348 residues long: 4-hydroxy-3-methylbut-2-en-1-yl diphosphate synthase (flavodoxin) (348 aa).

C263, C266, C298, and E305 together coordinate [4Fe-4S] cluster.

It belongs to the IspG family. [4Fe-4S] cluster serves as cofactor.

It catalyses the reaction (2E)-4-hydroxy-3-methylbut-2-enyl diphosphate + oxidized [flavodoxin] + H2O + 2 H(+) = 2-C-methyl-D-erythritol 2,4-cyclic diphosphate + reduced [flavodoxin]. It participates in isoprenoid biosynthesis; isopentenyl diphosphate biosynthesis via DXP pathway; isopentenyl diphosphate from 1-deoxy-D-xylulose 5-phosphate: step 5/6. Its function is as follows. Converts 2C-methyl-D-erythritol 2,4-cyclodiphosphate (ME-2,4cPP) into 1-hydroxy-2-methyl-2-(E)-butenyl 4-diphosphate. The chain is 4-hydroxy-3-methylbut-2-en-1-yl diphosphate synthase (flavodoxin) from Dehalococcoides mccartyi (strain CBDB1).